We begin with the raw amino-acid sequence, 415 residues long: MSLQAPKGTKDLLPTESYKWQYLENKFRNIAADFGCREIRTPVFEYTELFQRGVGETTDVVQKEMYTFEDKAGRSITLKPEGTSPAVRAFVEGRLFNETQPTKMYYFTPVMRYENVQKGRLRQHHQFGIEIFGAKDASVDAEVISIPVGIYKELGVEGVELNINSIGCPKCRKTYNEALKKYLSKNYDKLCSTCKTRFDKNPLRILDCKVDTCKEIVKDAPIILDYICGECKEHFESLKNYLDVLNINYKIDPFIVRGLDYYSKTVFEFITDDITICAGGRYDYLIEEIGGPSMPAVGFGMGMERLLLTLQEKAIEIPEEAYVDLYLGNMGDKAKLEVLKLAKELRDRHIKCEIDHMGKSVKAQMKYANRIGAKYSMVLGEEELNTGKATIKKMEDGQQIEVDIKDMDTLIKVFK.

Belongs to the class-II aminoacyl-tRNA synthetase family. As to quaternary structure, homodimer.

It localises to the cytoplasm. It carries out the reaction tRNA(His) + L-histidine + ATP = L-histidyl-tRNA(His) + AMP + diphosphate + H(+). The protein is Histidine--tRNA ligase of Clostridium botulinum (strain Kyoto / Type A2).